A 2537-amino-acid polypeptide reads, in one-letter code: Histone-lysine N-methyltransferase SETD2 (2537 aa).

Positions 1 to 12 (MKPLPSQQPPPK) are enriched in pro residues. Disordered regions lie at residues 1 to 31 (MKPL…ENEA), 91 to 142 (TALS…ELGR), 156 to 483 (PQLA…RDLR), 510 to 554 (YTSK…STSR), and 607 to 629 (SERE…TFKK). Positions 18-31 (DPEHPTPEEEENEA) are enriched in basic and acidic residues. Residues 91–103 (TALSNEKQSDSPN) show a composition bias toward polar residues. At S132 the chain carries Phosphoserine. The span at 156–166 (PQLAASTTAAS) shows a compositional bias: low complexity. Residues 187–205 (PSSPPPPPPPPQASSPSPP) show a composition bias toward pro residues. At S242 the chain carries Phosphoserine. Residues 264 to 291 (LEEHTVQTLKEQADHLLQKEDSHIGKEE) are compositionally biased toward basic and acidic residues. 3 positions are modified to phosphoserine: S322, S324, and S345. Basic and acidic residues-rich tracts occupy residues 336 to 401 (RSHD…ERDR), 422 to 433 (RSERSHYYDSER), 440 to 468 (PYRE…EYKK), and 510 to 528 (YTSK…ETIK). K360 is covalently cross-linked (Glycyl lysine isopeptide (Lys-Gly) (interchain with G-Cter in SUMO2)). At S423 the chain carries Phosphoserine. S532, S614, and S624 each carry phosphoserine. The span at 613-625 (GSPTPSNQLNDSP) shows a compositional bias: polar residues. Residue T626 is modified to Phosphothreonine. S633 is modified (phosphoserine). K637 is covalently cross-linked (Glycyl lysine isopeptide (Lys-Gly) (interchain with G-Cter in SUMO2)). S697, S707, S743, and S753 each carry phosphoserine. A disordered region spans residues 729-749 (RDSDDTCRQHNTSKSPFREME). A Glycyl lysine isopeptide (Lys-Gly) (interchain with G-Cter in SUMO2) cross-link involves residue K775. Disordered regions lie at residues 829–894 (CDNR…PTLD), 941–974 (QEAQ…HISD), 1015–1078 (EDYS…HYSD), and 1135–1185 (AHAQ…EDLP). Residues 830 to 847 (DNREPTDRHSENTCDEYK) are compositionally biased toward basic and acidic residues. Residues 849–858 (SIGSTSSASH) are compositionally biased toward polar residues. Residues 867 to 883 (PIGSSGISSLQSPPSGI) show a composition bias toward low complexity. Residues 951-974 (LHERRGRPEIPLDEEQRGHTHISD) are compositionally biased toward basic and acidic residues. A compositionally biased stretch (acidic residues) spans 1026–1037 (DESDSEDTESDD). S1077 bears the Phosphoserine mark. Basic and acidic residues predominate over residues 1150–1165 (SRSDHLGHLNPEDTLR). A Phosphoserine modification is found at S1201. Disordered regions lie at residues 1232–1254 (GWDF…SYGT), 1280–1346 (WDPR…APEI), and 1366–1396 (NFEK…GELQ). Composition is skewed to polar residues over residues 1235 to 1254 (FSQQ…SYGT) and 1319 to 1329 (RSGSHFSSPSN). Over residues 1366 to 1377 (NFEKNDIKERGP) the composition is skewed to basic and acidic residues. Phosphoserine occurs at positions 1387, 1389, and 1391. Residues 1392 to 1688 (DGELQARKKV…KKERSRKKDS (297 aa)) form an interaction with TUBA1A region. The region spanning 1468 to 1522 (IKRMQCECTPLSKDERAQGEVACGEDCLNRLLMIECSSRCPNGDYCSNRRFQRKQ) is the AWS domain. Zn(2+) is bound by residues C1473, C1475, C1490, C1494, C1503, C1507, and C1513. The SET domain maps to 1524-1641 (ADVEVILTEK…SGSELTFDYQ (118 aa)). Residues 1534 to 1536 (KGW), 1577 to 1579 (HYY), and 1602 to 1603 (NH) contribute to the S-adenosyl-L-methionine site. Position 1605 (C1605) interacts with Zn(2+). A Post-SET domain is found at 1648–1664 (EAQKCFCGSANCRGYLG). Residue Q1650 participates in S-adenosyl-L-methionine binding. Residue C1652 participates in Zn(2+) binding. Residue F1653 participates in S-adenosyl-L-methionine binding. Zn(2+)-binding residues include C1654 and C1659. Phosphoserine is present on residues S1670, S1818, and S1819. Residues 1806-1848 (TAVPQLSEGDGYSSENTSRAHTPLNTPDPSAKPSTEMDTDTPK) form a disordered region. The segment covering 1818–1833 (SSENTSRAHTPLNTPD) has biased composition (polar residues). T1827 and T1846 each carry phosphothreonine. Residues S1862 and S1926 each carry the phosphoserine modification. 2 disordered regions span residues 1914 to 1981 (SEAT…DISD) and 1993 to 2110 (LKEV…AQKQ). Residues 1934 to 1946 (TEPKDSNGTKLEE) are compositionally biased toward basic and acidic residues. The segment covering 1947-1964 (TIAEETPSQDEEEGVSDV) has biased composition (acidic residues). Residues S1954, S1962, and S1969 each carry the phosphoserine modification. 3 stretches are compositionally biased toward basic and acidic residues: residues 1965–1978 (ESER…KTVD), 1993–2020 (LKEV…DAAA), and 2032–2045 (RSRE…SQNK). A phosphoserine mark is found at S2053 and S2055. 2 stretches are compositionally biased toward basic and acidic residues: residues 2063 to 2073 (RGTKRPDDRYD) and 2084 to 2108 (KDRN…REAQ). A coiled-coil region spans residues 2090–2119 (STEERRKLFEQEVAQREAQKQQQQMQNLGM). A low charge region region spans residues 2110 to 2339 (QQQQMQNLGM…APGQPQSLQP (230 aa)). The WW domain occupies 2362 to 2395 (IVLPPNWKTARDPEGKIYYYHVITRQTQWDPPTW). The segment at 2412-2438 (LGTPTYDENPMKTSKKPKTAEADTSSE) is disordered. The interval 2430 to 2537 (TAEADTSSEL…YKPKEDTELE (108 aa)) is interaction with POLR2A.

It belongs to the class V-like SAM-binding methyltransferase superfamily. Histone-lysine methyltransferase family. SET2 subfamily. In terms of assembly, specifically interacts with hyperphosphorylated C-terminal domain (CTD) of RNA polymerase II large subunit (POLR2A): binds to CTD heptad repeats doubly phosphorylated on 'Ser-2' and 'Ser-5' of each heptad. Interacts with HTT. Interacts with IWS1. Interacts with p53/TP53; leading to regulate p53/TP53 target genes. Component of a complex with HNRNPL. Interacts with TUBA1A; the interaction is independent on alpha-tubulin acetylation on 'Lys-40'. May be automethylated.

It is found in the nucleus. The protein resides in the chromosome. The enzyme catalyses L-lysyl(36)-[histone H3] + 3 S-adenosyl-L-methionine = N(6),N(6),N(6)-trimethyl-L-lysyl(36)-[histone H3] + 3 S-adenosyl-L-homocysteine + 3 H(+). It catalyses the reaction L-lysyl-[protein] + S-adenosyl-L-methionine = N(6)-methyl-L-lysyl-[protein] + S-adenosyl-L-homocysteine + H(+). It carries out the reaction L-lysyl-[protein] + 3 S-adenosyl-L-methionine = N(6),N(6),N(6)-trimethyl-L-lysyl-[protein] + 3 S-adenosyl-L-homocysteine + 3 H(+). With respect to regulation, specifically inhibited by sinefungin derivatives. Its function is as follows. Histone methyltransferase that specifically trimethylates 'Lys-36' of histone H3 (H3K36me3) using dimethylated 'Lys-36' (H3K36me2) as substrate. It is capable of trimethylating unmethylated H3K36 (H3K36me0) in vitro. Represents the main enzyme generating H3K36me3, a specific tag for epigenetic transcriptional activation. Plays a role in chromatin structure modulation during elongation by coordinating recruitment of the FACT complex and by interacting with hyperphosphorylated POLR2A. Acts as a key regulator of DNA mismatch repair in G1 and early S phase by generating H3K36me3, a mark required to recruit MSH6 subunit of the MutS alpha complex: early recruitment of the MutS alpha complex to chromatin to be replicated allows a quick identification of mismatch DNA to initiate the mismatch repair reaction. Required for DNA double-strand break repair in response to DNA damage: acts by mediating formation of H3K36me3, promoting recruitment of RAD51 and DNA repair via homologous recombination (HR). Acts as a tumor suppressor. H3K36me3 also plays an essential role in the maintenance of a heterochromatic state, by recruiting DNA methyltransferase DNMT3A. H3K36me3 is also enhanced in intron-containing genes, suggesting that SETD2 recruitment is enhanced by splicing and that splicing is coupled to recruitment of elongating RNA polymerase. Required during angiogenesis. Required for endoderm development by promoting embryonic stem cell differentiation toward endoderm: acts by mediating formation of H3K36me3 in distal promoter regions of FGFR3, leading to regulate transcription initiation of FGFR3. In addition to histones, also mediates methylation of other proteins, such as tubulins and STAT1. Trimethylates 'Lys-40' of alpha-tubulins such as TUBA1B (alpha-TubK40me3); alpha-TubK40me3 is required for normal mitosis and cytokinesis and may be a specific tag in cytoskeletal remodeling. Involved in interferon-alpha-induced antiviral defense by mediating both monomethylation of STAT1 at 'Lys-525' and catalyzing H3K36me3 on promoters of some interferon-stimulated genes (ISGs) to activate gene transcription. This Mus musculus (Mouse) protein is Histone-lysine N-methyltransferase SETD2.